Here is a 312-residue protein sequence, read N- to C-terminus: Elongation factor Ts, mitochondrial (312 aa).

The protein belongs to the EF-Ts family.

The protein localises to the mitochondrion. Its function is as follows. Associates with the EF-Tu.GDP complex and induces the exchange of GDP to GTP. It remains bound to the aminoacyl-tRNA.EF-Tu.GTP complex up to the GTP hydrolysis stage on the ribosome. In Xenopus laevis (African clawed frog), this protein is Elongation factor Ts, mitochondrial (tsfm).